A 207-amino-acid polypeptide reads, in one-letter code: Dephospho-CoA kinase (207 aa).

The DPCK domain occupies 10-207 (ILGLTGGIGS…FYLTLRGGQP (198 aa)). 18 to 23 (GSGKSA) is an ATP binding site.

This sequence belongs to the CoaE family.

The protein localises to the cytoplasm. It carries out the reaction 3'-dephospho-CoA + ATP = ADP + CoA + H(+). The protein operates within cofactor biosynthesis; coenzyme A biosynthesis; CoA from (R)-pantothenate: step 5/5. Catalyzes the phosphorylation of the 3'-hydroxyl group of dephosphocoenzyme A to form coenzyme A. The protein is Dephospho-CoA kinase of Pseudomonas putida (Arthrobacter siderocapsulatus).